A 267-amino-acid chain; its full sequence is Deoxyribose-phosphate aldolase (267 aa).

Aspartate 123 serves as the catalytic Proton donor/acceptor. The active-site Schiff-base intermediate with acetaldehyde is the lysine 185. The active-site Proton donor/acceptor is the lysine 217.

It belongs to the DeoC/FbaB aldolase family. DeoC type 1 subfamily.

It is found in the cytoplasm. It carries out the reaction 2-deoxy-D-ribose 5-phosphate = D-glyceraldehyde 3-phosphate + acetaldehyde. Its pathway is carbohydrate degradation; 2-deoxy-D-ribose 1-phosphate degradation; D-glyceraldehyde 3-phosphate and acetaldehyde from 2-deoxy-alpha-D-ribose 1-phosphate: step 2/2. In terms of biological role, catalyzes a reversible aldol reaction between acetaldehyde and D-glyceraldehyde 3-phosphate to generate 2-deoxy-D-ribose 5-phosphate. The chain is Deoxyribose-phosphate aldolase from Coccidioides immitis (strain RS) (Valley fever fungus).